The chain runs to 134 residues: Transmembrane protein 100 (134 aa).

Serine 15 bears the Phosphoserine mark. A run of 2 helical transmembrane segments spans residues 56 to 76 and 84 to 104; these read CVIPFAVVVLITGTVVTAVAY and IISILGLVLLSLGLFLLASSA. The residue at position 121 (serine 121) is a Phosphoserine.

As to quaternary structure, interacts (via C-terminus) with TRPA1 and TRPV1. Interacts with TASOR.

The protein localises to the cell membrane. The protein resides in the membrane. It is found in the perikaryon. It localises to the cytoplasm. Its subcellular location is the perinuclear region. The protein localises to the endoplasmic reticulum. Its function is as follows. Plays a role during embryonic arterial endothelium differentiation and vascular morphogenesis through the ACVRL1 receptor-dependent signaling pathway upon stimulation by bone morphogenetic proteins, such as GDF2/BMP9 and BMP10. Involved in the regulation of nociception, acting as a modulator of the interaction between TRPA1 and TRPV1, two molecular sensors and mediators of pain signals in dorsal root ganglia (DRG) neurons. Mechanistically, it weakens their interaction, thereby releasing the inhibition of TRPA1 by TRPV1 and increasing the single-channel open probability of the TRPA1-TRPV1 complex. The chain is Transmembrane protein 100 (TMEM100) from Bos taurus (Bovine).